Reading from the N-terminus, the 201-residue chain is Large ribosomal subunit protein uL4 (201 aa).

A disordered region spans residues 46-71; it reads QKTRAEVIGSGKKPWRQKGTGRARAG.

The protein belongs to the universal ribosomal protein uL4 family. In terms of assembly, part of the 50S ribosomal subunit.

Its function is as follows. One of the primary rRNA binding proteins, this protein initially binds near the 5'-end of the 23S rRNA. It is important during the early stages of 50S assembly. It makes multiple contacts with different domains of the 23S rRNA in the assembled 50S subunit and ribosome. Forms part of the polypeptide exit tunnel. The chain is Large ribosomal subunit protein uL4 from Shewanella sediminis (strain HAW-EB3).